Reading from the N-terminus, the 452-residue chain is Serine carboxypeptidase-like 26 (452 aa).

The N-terminal stretch at 1 to 20 is a signal peptide; the sequence is MARLLLLFFFFLILLHYASC. N-linked (GlcNAc...) asparagine glycans are attached at residues Asn52 and Asn138. 3 disulfide bridges follow: Cys87–Cys338, Cys244–Cys256, and Cys280–Cys306. Ser180 is an active-site residue. Asn327 is a glycosylation site (N-linked (GlcNAc...) asparagine). Catalysis depends on residues Asp375 and His427.

It belongs to the peptidase S10 family. As to expression, ubiquitous.

The protein localises to the secreted. In terms of biological role, probable carboxypeptidase. This chain is Serine carboxypeptidase-like 26 (SCPL26), found in Arabidopsis thaliana (Mouse-ear cress).